The chain runs to 1024 residues: Eukaryotic translation initiation factor 3 subunit A (1024 aa).

Residues V331–F508 enclose the PCI domain. Coiled-coil stretches lie at residues A575–A717 and K777–R889. Basic and acidic residues-rich tracts occupy residues K797–A866 and D873–R886. Disordered stretches follow at residues K797–R973 and A1001–A1024. Low complexity-rich tracts occupy residues A890–A906 and K946–A971.

This sequence belongs to the eIF-3 subunit A family. Component of the eukaryotic translation initiation factor 3 (eIF-3) complex.

Its subcellular location is the cytoplasm. RNA-binding component of the eukaryotic translation initiation factor 3 (eIF-3) complex, which is involved in protein synthesis of a specialized repertoire of mRNAs and, together with other initiation factors, stimulates binding of mRNA and methionyl-tRNAi to the 40S ribosome. The eIF-3 complex specifically targets and initiates translation of a subset of mRNAs involved in cell proliferation. In Mycosarcoma maydis (Corn smut fungus), this protein is Eukaryotic translation initiation factor 3 subunit A.